Consider the following 354-residue polypeptide: UDP-3-O-acylglucosamine N-acyltransferase (354 aa).

His-257 (proton acceptor) is an active-site residue. The segment at Ala-335–Asp-354 is disordered.

This sequence belongs to the transferase hexapeptide repeat family. LpxD subfamily. In terms of assembly, homotrimer.

It carries out the reaction a UDP-3-O-[(3R)-3-hydroxyacyl]-alpha-D-glucosamine + a (3R)-hydroxyacyl-[ACP] = a UDP-2-N,3-O-bis[(3R)-3-hydroxyacyl]-alpha-D-glucosamine + holo-[ACP] + H(+). Its pathway is bacterial outer membrane biogenesis; LPS lipid A biosynthesis. Its function is as follows. Catalyzes the N-acylation of UDP-3-O-acylglucosamine using 3-hydroxyacyl-ACP as the acyl donor. Is involved in the biosynthesis of lipid A, a phosphorylated glycolipid that anchors the lipopolysaccharide to the outer membrane of the cell. This Rhizobium etli (strain ATCC 51251 / DSM 11541 / JCM 21823 / NBRC 15573 / CFN 42) protein is UDP-3-O-acylglucosamine N-acyltransferase.